Consider the following 492-residue polypeptide: Trehalose-6-phosphate synthase (492 aa).

Arg-25 lines the D-glucose 6-phosphate pocket. A UDP-alpha-D-glucose-binding site is contributed by 45–46; that stretch reads GG. D-glucose 6-phosphate-binding residues include Tyr-101 and Asp-155. UDP-alpha-D-glucose is bound by residues Arg-297 and Lys-302. Arg-335 is a D-glucose 6-phosphate binding site. Residue 400-404 participates in UDP-alpha-D-glucose binding; that stretch reads LVAKE.

It belongs to the glycosyltransferase 20 family. As to quaternary structure, homotetramer.

The catalysed reaction is ADP-alpha-D-glucose + D-glucose 6-phosphate = alpha,alpha-trehalose 6-phosphate + ADP + H(+). It carries out the reaction CDP-alpha-D-glucose + D-glucose 6-phosphate = alpha,alpha-trehalose 6-phosphate + CDP + H(+). It catalyses the reaction GDP-alpha-D-glucose + D-glucose 6-phosphate = alpha,alpha-trehalose 6-phosphate + GDP + H(+). The enzyme catalyses TDP-alpha-D-glucose + D-glucose 6-phosphate = 5-methyl-UDP + alpha,alpha-trehalose 6-phosphate + H(+). The catalysed reaction is D-glucose 6-phosphate + UDP-alpha-D-glucose = alpha,alpha-trehalose 6-phosphate + UDP + H(+). The protein operates within glycan biosynthesis; trehalose biosynthesis. Its function is as follows. Probably involved in the osmoprotection via the biosynthesis of trehalose and in the production of glycogen and alpha-glucan via the TreS-Pep2 branch involved in the biosynthesis of maltose-1-phosphate (M1P). Catalyzes the transfer of glucose from UDP-glucose (UDP-Glc) to D-glucose 6-phosphate (Glc-6-P) to form trehalose-6-phosphate. Probably also able to use ADP-Glc, CDP-Glc, GDP-Glc and TDP-Glc as glucosyl donors. The protein is Trehalose-6-phosphate synthase of Mycolicibacterium paratuberculosis (strain ATCC BAA-968 / K-10) (Mycobacterium paratuberculosis).